The primary structure comprises 83 residues: Small ribosomal subunit protein bS20 (83 aa).

Belongs to the bacterial ribosomal protein bS20 family.

Functionally, binds directly to 16S ribosomal RNA. This Leuconostoc citreum (strain KM20) protein is Small ribosomal subunit protein bS20.